Consider the following 124-residue polypeptide: UPF0102 protein Rcas_2007 (124 aa).

It belongs to the UPF0102 family.

The polypeptide is UPF0102 protein Rcas_2007 (Roseiflexus castenholzii (strain DSM 13941 / HLO8)).